Here is a 1707-residue protein sequence, read N- to C-terminus: Kinesin-like protein KIF1A (1707 aa).

Residues 5–354 (SVKVAVRVRP…LRYADRAKQI (350 aa)) form the Kinesin motor domain. Residues Gly102, Lys103, Ser104, Tyr105, and Ser215 each coordinate ATP. Residue Ser104 participates in Mg(2+) binding. Residues 439–466 (SEEAIERLKETEKIIAELNETWEEKLRR) adopt a coiled-coil conformation. Residues 525–581 (TRVGREDAERRQDIVLSGHFIKEEHCIFRSDSRGGGEAVVTLEPCEGADTYVNGKKV) form the FHA domain. 2 coiled-coil regions span residues 637–671 (EKQG…LLEQ) and 811–831 (LEKL…AAEV). The tract at residues 657–1105 (QYRREREEAT…LCKDVLSPLR (449 aa)) is required for interaction with CALM1, PPFIA2 and TANC2. 2 disordered regions span residues 1424–1462 (PVPE…EVPN) and 1536–1576 (TDVR…EKEP). Residues 1429–1453 (LSPASSEDSESRSSSGASSPLSAEG) show a composition bias toward low complexity. The PH domain maps to 1592–1690 (IVSKKGYLHF…WLYAFNPLLA (99 aa)).

It belongs to the TRAFAC class myosin-kinesin ATPase superfamily. Kinesin family. Unc-104 subfamily. As to quaternary structure, dimeric motor; dimerization is required for ATP-driven processive motility. Monomer in vitro. Interacts with PPFIA1 and PPFIA4. Interacts with CALM1; the interaction is increased in presence of calcium and increases neuronal dense core vesicles motility. Interacts with PPFIA2 and TANC2; both interactions allow the recruitment of neuronal dense core vesicles to dendritic spines and decrease in presence of calcium. Interacts with SYT4 (unphosphorylated) and SYT11; both interactions increase in presence of calcium. Interacts with MADD.

It is found in the cytoplasm. It localises to the cytoskeleton. The protein resides in the cell projection. Its subcellular location is the neuron projection. The protein localises to the axon. It is found in the perinuclear region. It localises to the synapse. The protein resides in the cytoplasmic vesicle. Its subcellular location is the secretory vesicle. The protein localises to the neuronal dense core vesicle membrane. The enzyme catalyses ATP + H2O + a kinesin associated with a microtubule at position (n) = ADP + phosphate a kinesin associated with a microtubule at position (n+1, toward the plus end).. In terms of biological role, kinesin motor with a plus-end-directed microtubule motor activity, involved in anterograde axonal transport of synaptic vesicle precursors. Also required for neuronal dense core vesicles (DCVs) transport to the dendritic spines and axons. The interaction calcium-dependent with CALM1 increases vesicle motility and interaction with the scaffolding proteins PPFIA2 and TANC2 recruits DCVs to synaptic sites. In Rattus norvegicus (Rat), this protein is Kinesin-like protein KIF1A.